The primary structure comprises 110 residues: Secreted RxLR effector protein 89 (110 aa).

The first 22 residues, 1–22 (MTSVVIVVSVAVLLGVLVITDS), serve as a signal peptide directing secretion. An N-linked (GlcNAc...) asparagine glycan is attached at N29. The RxLR-dEER motif lies at 61 to 74 (RHLRTILQWWQERR).

This sequence belongs to the RxLR effector family.

It is found in the secreted. The protein localises to the host nucleus. The protein resides in the host cytoplasm. In terms of biological role, secreted effector that completely suppresses the host cell death induced by cell death-inducing proteins. The polypeptide is Secreted RxLR effector protein 89 (Plasmopara viticola (Downy mildew of grapevine)).